Here is a 512-residue protein sequence, read N- to C-terminus: Putative ankyrin repeat protein FPV233 (512 aa).

ANK repeat units lie at residues 45-73, 77-106, 136-168, 172-201, 205-236, 238-262, 266-296, and 301-329; these read IPFI…NVNQ, DDTY…QCSV, IQDI…DINM, HGNS…NPNI, TNKS…NTDP, LSHA…SINA, YGNT…DVNA, and RNLT…DINS.

This Vertebrata (FPV) protein is Putative ankyrin repeat protein FPV233.